Here is a 452-residue protein sequence, read N- to C-terminus: Pentatricopeptide repeat-containing protein At2g30780 (452 aa).

PPR repeat units lie at residues 137–171 (TASV…THCA), 173–207 (TVVT…KLPP), 208–242 (NSVT…PVEP), 243–273 (DTDT…IKDQ), 350–384 (KSSI…GWKL), 385–419 (CRSL…NYGL), and 420–452 (VTKT…KRGL).

This sequence belongs to the PPR family. P subfamily.

The protein is Pentatricopeptide repeat-containing protein At2g30780 of Arabidopsis thaliana (Mouse-ear cress).